Here is a 407-residue protein sequence, read N- to C-terminus: Subtilisin-like protease CPC735_013710 (407 aa).

Positions 1–17 are cleaved as a signal peptide; sequence MQLLNLSLFFLLPFATA. Positions 18 to 115 are excised as a propeptide; sequence NPIPQDSQNI…VLPDQKIYLA (98 aa). In terms of domain architecture, Inhibitor I9 spans 31–114; that stretch reads QYIVTLKDGL…SVLPDQKIYL (84 aa). A Peptidase S8 domain is found at 124 to 407; that stretch reads GWNLGYMSSK…VAYNGIQEML (284 aa). The N-linked (GlcNAc...) asparagine glycan is linked to N145. Catalysis depends on charge relay system residues D162 and H194. N-linked (GlcNAc...) asparagine glycosylation is found at N241, N254, and N341. Residue S350 is the Charge relay system of the active site. N-linked (GlcNAc...) asparagine glycosylation is present at N381.

It belongs to the peptidase S8 family.

The protein resides in the secreted. Functionally, secreted subtilisin-like serine protease with keratinolytic activity that contributes to pathogenicity. The protein is Subtilisin-like protease CPC735_013710 of Coccidioides posadasii (strain C735) (Valley fever fungus).